A 748-amino-acid chain; its full sequence is E3 ubiquitin-protein ligase DTX3L (748 aa).

Position 2 is an N-acetylalanine (A2). S9 bears the Phosphoserine mark. Disordered stretches follow at residues D94–T117, E209–Q238, and Q528–S562. A compositionally biased stretch (polar residues) spans S101–T117. 2 stretches are compositionally biased toward basic and acidic residues: residues E209–R219 and T227–P236. At S215 the chain carries Phosphoserine. S536 carries the post-translational modification Phosphoserine. An RING-type zinc finger spans residues C569–L608.

Belongs to the Deltex family. In terms of assembly, homodimer and heterodimer. Can heterodimerize with DTX1, enhancing its ubiquitin ligase activity in vitro. Interacts (via N-terminus) with ADP ribosyltransferase PARP9/BAL1 (via PARP catalytic domain) forming a stable complex; the interaction is required to activate PARP9 but is dispensable for DTX3L catalytic activity. Forms a complex with STAT1 and PARP9 independently of IFNB1 or IFNG-mediated STAT1 'Tyr-701' phosphorylation. Found in a complex with PARP9, STAT1 and H2BC9. Found in a complex with E3 ligase ITCH and ESCRT-0 components HGS and STAM. Interacts (via C-terminus) with ITCH; the interaction is increased upon CXCL12 stimulation and inhibits ITCH catalytic activity; the interaction is direct. Interacts with HGS and STAM; the interaction brings together HGS and STAM and promotes their recruitment to early endosomes. Autoubiquitinated.

Its subcellular location is the cytoplasm. The protein localises to the nucleus. It localises to the early endosome membrane. It is found in the lysosome membrane. The catalysed reaction is S-ubiquitinyl-[E2 ubiquitin-conjugating enzyme]-L-cysteine + [acceptor protein]-L-lysine = [E2 ubiquitin-conjugating enzyme]-L-cysteine + N(6)-ubiquitinyl-[acceptor protein]-L-lysine.. Its pathway is protein modification; protein ubiquitination. With respect to regulation, binding to PARP9 enhances DTX3L catalytic activity. Functionally, E3 ubiquitin-protein ligase which, in association with ADP-ribosyltransferase PARP9, plays a role in DNA damage repair and in interferon-mediated antiviral responses. Monoubiquitinates several histones, including histone H2A, H2B, H3 and H4. In response to DNA damage, mediates monoubiquitination of 'Lys-91' of histone H4 (H4K91ub1). The exact role of H4K91ub1 in DNA damage response is still unclear but it may function as a licensing signal for additional histone H4 post-translational modifications such as H4 'Lys-20' methylation (H4K20me). PARP1-dependent PARP9-DTX3L-mediated ubiquitination promotes the rapid and specific recruitment of 53BP1/TP53BP1, UIMC1/RAP80, and BRCA1 to DNA damage sites. By monoubiquitinating histone H2B H2BC9/H2BJ and thereby promoting chromatin remodeling, positively regulates STAT1-dependent interferon-stimulated gene transcription and thus STAT1-mediated control of viral replication. Independently of its catalytic activity, promotes the sorting of chemokine receptor CXCR4 from early endosome to lysosome following CXCL12 stimulation by reducing E3 ligase ITCH activity and thus ITCH-mediated ubiquitination of endosomal sorting complex required for transport ESCRT-0 components HGS and STAM. In addition, required for the recruitment of HGS and STAM to early endosomes. The protein is E3 ubiquitin-protein ligase DTX3L (Dtx3l) of Mus musculus (Mouse).